The primary structure comprises 601 residues: MSSDSMRNIRNFSIIAHVDHGKSTLADRIIQLCGGLQAREMEAQVLDSNPIERERGITIKAQSVSLPYTAKDGQTYFLNFIDTPGHVDFSYEVSRSLAACEGALLVVDAAQGVEAQSVANCYTAVEQGLEVVPVLNKIDLPTADIERAKAEIEAVIGIDAEDAVAVSAKTGLNIDLVLEAIVHRIPPPKPRDTDKLQALIIDSWFDNYLGVVSLVRVMQGEIKPGSKIQVMSTGRTHLVDKVGVFTPKRKELVALGAGEVGWINASIKDVHGAPVGDTLTLAADPAPHALPGFQEMQPRVFAGLFPVDAEDYPDLREALDKLRLNDAALRFEPESSEAMGFGFRCGFLGMLHMEIVQERLEREYNLNLISTAPTVVYEVLKTDGTIIPMDNPSKLPPLNHVEEIREPIIRANILTPPDYVGNIITLCEEKRGSQIGINYLGSQVQISYELPMAEVVLDFFDKLKSVSRGYASLDYHFLRFDAGPFVRVDTLINGDKVDALSIIVHRSYADRRGRELCEKMKELIPRQMFDVAIQAAVGSQIISRSTVKAMRKNVLAKCYGGDVSRKKKLLEKQKEGKKRMKQVGRVEIPQEAFLAVLQMDK.

Positions 7 to 189 (RNIRNFSIIA…AIVHRIPPPK (183 aa)) constitute a tr-type G domain. GTP contacts are provided by residues 19-24 (DHGKST) and 136-139 (NKID).

This sequence belongs to the TRAFAC class translation factor GTPase superfamily. Classic translation factor GTPase family. LepA subfamily.

The protein localises to the cell inner membrane. The enzyme catalyses GTP + H2O = GDP + phosphate + H(+). Its function is as follows. Required for accurate and efficient protein synthesis under certain stress conditions. May act as a fidelity factor of the translation reaction, by catalyzing a one-codon backward translocation of tRNAs on improperly translocated ribosomes. Back-translocation proceeds from a post-translocation (POST) complex to a pre-translocation (PRE) complex, thus giving elongation factor G a second chance to translocate the tRNAs correctly. Binds to ribosomes in a GTP-dependent manner. In Xanthomonas campestris pv. campestris (strain 8004), this protein is Elongation factor 4.